A 204-amino-acid polypeptide reads, in one-letter code: High frequency lysogenization protein HflD homolog (204 aa).

This sequence belongs to the HflD family.

It is found in the cytoplasm. Its subcellular location is the cell inner membrane. The chain is High frequency lysogenization protein HflD homolog from Shewanella sediminis (strain HAW-EB3).